Consider the following 930-residue polypeptide: uncharacterized protein (930 aa).

The first 20 residues, 1–20 (MPSFVLWTFHLCSQWFQGLT), serve as a signal peptide directing secretion. N-linked (GlcNAc...) asparagine glycans are attached at residues Asn-137, Asn-146, Asn-164, Asn-210, Asn-257, Asn-628, Asn-717, and Asn-799.

Its subcellular location is the secreted. This is an uncharacterized protein from Arthroderma benhamiae (strain ATCC MYA-4681 / CBS 112371) (Trichophyton mentagrophytes).